The following is a 74-amino-acid chain: Protein krueppel (74 aa).

C2H2-type zinc fingers lie at residues E1–H4, F10–H32, Y38–H60, and Y66–R74.

Belongs to the krueppel C2H2-type zinc-finger protein family.

It is found in the nucleus. Functionally, krueppel is a gap class segmentation protein. The protein is Protein krueppel (Kr) of Psychoda cinerea (Psychod fly).